We begin with the raw amino-acid sequence, 319 residues long: uncharacterized protein (319 aa).

The MPN domain occupies 29–164; the sequence is VNISSLALLK…LDAFRSVNPL (136 aa). Residues histidine 111, histidine 113, and aspartate 124 each contribute to the Zn(2+) site. The JAMM motif signature appears at 111–124; sequence HSHPGFGCWLSSVD.

Belongs to the peptidase M67A family.

This is an uncharacterized protein from Caenorhabditis elegans.